Here is a 369-residue protein sequence, read N- to C-terminus: Xylene/toluene monooxygenase hydroxylase component XylM (369 aa).

Helical transmembrane passes span 8–28 (LIPVVTACGLIGFYYGGYWVW), 60–80 (LTQYLQLPLMIGLYGLLVFGV), and 91–111 (LQVAGCILSLAWLSGVPTLPV). Positions 113, 117, 143, 147, and 148 each coordinate Fe cation. Residues 207-227 (VALLLALPGLVSYLGGPALGL) form a helical membrane-spanning segment. Fe cation is bound by residues His282, His285, and His286. Residues 305-325 (MPSLFVCFLLGLIPPLWFALI) form a helical membrane-spanning segment.

This sequence belongs to the fatty acid desaturase type 1 family. AlkB subfamily. As to quaternary structure, the xylene/toluene monooxygenase is composed of two subunits: the electron transfer component XylA and the hydroxylase component XylM. It depends on Fe(2+) as a cofactor.

The protein localises to the cell inner membrane. The enzyme catalyses m-xylene + 2 reduced [2Fe-2S]-[ferredoxin] + O2 + 2 H(+) = 3-methylbenzyl alcohol + 2 oxidized [2Fe-2S]-[ferredoxin] + H2O. It catalyses the reaction p-xylene + 2 reduced [2Fe-2S]-[ferredoxin] + O2 + 2 H(+) = 4-methylbenzyl alcohol + 2 oxidized [2Fe-2S]-[ferredoxin] + H2O. It carries out the reaction toluene + 2 reduced [2Fe-2S]-[ferredoxin] + O2 + 2 H(+) = benzyl alcohol + 2 oxidized [2Fe-2S]-[ferredoxin] + H2O. Its function is as follows. Component of a monooxygenase that catalyzes the first step in the degradation of xylenes and toluenes. XylM catalyzes the hydroxylation of the methyl side chain of xylenes and toluenes. The electrons are provided by the electron transfer component XylA. The best substrates are m-xylene and p-xylene, followed by toluene. Shows weak activity with o-xylene. In vitro, is also active with substituted compounds, such as chlorotoluenes. Cannot use benzyl alcohol. In Pseudomonas putida (Arthrobacter siderocapsulatus), this protein is Xylene/toluene monooxygenase hydroxylase component XylM.